Here is a 444-residue protein sequence, read N- to C-terminus: Chromosome partition protein MukF (444 aa).

The interval 212–240 (LDETSGNLRELQDTLNAAGDKLQAQLLRI) is leucine-zipper.

The protein belongs to the MukF family. Interacts, and probably forms a ternary complex, with MukE and MukB via its C-terminal region. The complex formation is stimulated by calcium or magnesium. It is required for an interaction between MukE and MukB.

The protein localises to the cytoplasm. Its subcellular location is the nucleoid. Functionally, involved in chromosome condensation, segregation and cell cycle progression. May participate in facilitating chromosome segregation by condensation DNA from both sides of a centrally located replisome during cell division. Not required for mini-F plasmid partitioning. Probably acts via its interaction with MukB and MukE. Overexpression results in anucleate cells. It has a calcium binding activity. This chain is Chromosome partition protein MukF, found in Haemophilus influenzae (strain PittGG).